The chain runs to 341 residues: Fructose-1,6-bisphosphatase, cytosolic (341 aa).

Mg(2+) contacts are provided by glutamate 71, glutamate 100, aspartate 121, leucine 123, and aspartate 124. Residues 124–127 (DGSF), asparagine 215, tyrosine 247, tyrosine 267, and lysine 277 contribute to the substrate site. Residue glutamate 283 participates in Mg(2+) binding.

It belongs to the FBPase class 1 family. Requires Mg(2+) as cofactor.

The protein resides in the cytoplasm. It catalyses the reaction beta-D-fructose 1,6-bisphosphate + H2O = beta-D-fructose 6-phosphate + phosphate. This is Fructose-1,6-bisphosphatase, cytosolic from Pisum sativum (Garden pea).